Here is a 458-residue protein sequence, read N- to C-terminus: Tyrosine phenol-lyase (458 aa).

Position 258 is an N6-(pyridoxal phosphate)lysine (Lys-258).

This sequence belongs to the beta-eliminating lyase family. As to quaternary structure, homotetramer. The cofactor is pyridoxal 5'-phosphate.

It carries out the reaction L-tyrosine + H2O = phenol + pyruvate + NH4(+). The protein is Tyrosine phenol-lyase (tpl) of Symbiobacterium thermophilum (strain DSM 24528 / JCM 14929 / IAM 14863 / T).